The sequence spans 117 residues: Immunoglobulin heavy variable 3-74 (117 aa).

A signal peptide spans Met-1–Cys-19. Residues Glu-20–Ser-44 form a framework-1 region. Positions Glu-20–Arg-117 constitute an Ig-like domain. Cys-41 and Cys-115 form a disulfide bridge. The interval Gly-45–Trp-52 is complementarity-determining-1. Residues Met-53–Arg-69 are framework-2. The segment at Ile-70–Thr-77 is complementarity-determining-2. Positions Ser-78 to Cys-115 are framework-3. Positions Ala-116–Arg-117 are complementarity-determining-3.

Immunoglobulins are composed of two identical heavy chains and two identical light chains; disulfide-linked.

Its subcellular location is the secreted. It is found in the cell membrane. Functionally, v region of the variable domain of immunoglobulin heavy chains that participates in the antigen recognition. Immunoglobulins, also known as antibodies, are membrane-bound or secreted glycoproteins produced by B lymphocytes. In the recognition phase of humoral immunity, the membrane-bound immunoglobulins serve as receptors which, upon binding of a specific antigen, trigger the clonal expansion and differentiation of B lymphocytes into immunoglobulins-secreting plasma cells. Secreted immunoglobulins mediate the effector phase of humoral immunity, which results in the elimination of bound antigens. The antigen binding site is formed by the variable domain of one heavy chain, together with that of its associated light chain. Thus, each immunoglobulin has two antigen binding sites with remarkable affinity for a particular antigen. The variable domains are assembled by a process called V-(D)-J rearrangement and can then be subjected to somatic hypermutations which, after exposure to antigen and selection, allow affinity maturation for a particular antigen. This chain is Immunoglobulin heavy variable 3-74, found in Homo sapiens (Human).